A 68-amino-acid polypeptide reads, in one-letter code: Antimicrobial peptide UyCT3 (68 aa).

The N-terminal stretch at 1 to 23 is a signal peptide; it reads MKNQFVLLLLAIVFLQMIFQSDA. F36 carries the post-translational modification Phenylalanine amide. Residues 40 to 68 constitute a propeptide that is removed on maturation; sequence GLENMDKFDELFDGDLSEADLDFLKELMR.

This sequence belongs to the non-disulfide-bridged peptide (NDBP) superfamily. Short antimicrobial peptide (group 4) family. The non-amidated UyCT3 does not show antimicrobial activity. In terms of tissue distribution, expressed by the venom gland.

Its subcellular location is the secreted. It localises to the target cell membrane. Antimicrobial peptide that inhibits the growth of Gram-positive (S.aureus, MIC=10 uM) and Gram-negative bacteria (E.coli, MIC=15 uM and P.aeruginosa, MIC=6 uM). It also shows 35% of hemolysis when 15 uM are tested (95% at 50 uM). The polypeptide is Antimicrobial peptide UyCT3 (Urodacus yaschenkoi (Inland robust scorpion)).